The primary structure comprises 1782 residues: Signal-induced proliferation-associated 1-like protein 1 (1782 aa).

3 disordered regions span residues 1 to 28 (MTSLKRSQTERPVTADRASVVSTDGAPK), 47 to 125 (GSSV…VSLN), and 140 to 171 (KNKTGPAESMDSRFLMPEAYPSSPRKALRRIR). Residues 84–94 (PPRKENVKESS) are compositionally biased toward basic and acidic residues. Residues 95-125 (RSSQEIETSSCLESLSSKGSPVSQGSSVSLN) show a composition bias toward low complexity. Phosphoserine occurs at positions 162, 187, 193, 208, 255, and 288. The interval 277 to 297 (EREKPLKRRSKSETGDSSIFR) is disordered. Residues 599-816 (LMKLDEQGLN…RTRQEYLKDL (218 aa)) enclose the Rap-GAP domain. The 79-residue stretch at 953 to 1031 (EMTLRRNGLG…VVIIPPHDDC (79 aa)) folds into the PDZ domain. 2 disordered regions span residues 1069-1128 (QRNA…RLSP) and 1144-1213 (SQCR…SLAD). Phosphoserine is present on residues S1078, S1087, S1116, S1127, S1149, S1170, and S1181. A compositionally biased stretch (polar residues) spans 1080 to 1093 (QVPSQLQSPMTSRL). Residues 1149 to 1159 (SPSNLSSSSET) show a composition bias toward low complexity. The segment covering 1186-1205 (DRQNTQSDISGSGKSTPSWQ) has biased composition (polar residues). Residues S1234 and S1249 each carry the phosphoserine modification. The interval 1247-1285 (HLSPNKQGHSDSHYSSHSSSNTLSSNASSAHSDEKWYDG) is disordered. Low complexity predominate over residues 1261-1276 (SSHSSSNTLSSNASSA). A Phosphoserine; by PLK2 modification is found at S1305. The interval 1307–1342 (IDTASYGPSHGSTASLGASTSSPRSGPGKEKVAPLW) is disordered. The residue at position 1309 (T1309) is a Phosphothreonine; by PLK2. A compositionally biased stretch (low complexity) spans 1315–1328 (SHGSTASLGASTSS). Phosphoserine; by CDK5 is present on S1328. Phosphoserine is present on S1345. The segment covering 1358 to 1368 (TEGHGMDRKAE) has biased composition (basic and acidic residues). Residues 1358 to 1454 (TEGHGMDRKA…SSSGPRTFYP (97 aa)) form a disordered region. 5 positions are modified to phosphoserine: S1369, S1370, S1391, S1410, and S1412. The span at 1378 to 1410 (KSQGGSSPLSRENSTFSINDAASHTSTMSSRHS) shows a compositional bias: polar residues. Residues 1432 to 1447 (SSQLAPSFSSSSSSSS) are compositionally biased toward low complexity. Residues S1507 and S1528 each carry the phosphoserine modification. T1530 is subject to Phosphothreonine. S1533, S1544, S1547, S1564, and S1567 each carry phosphoserine. The residue at position 1580 (R1580) is an Asymmetric dimethylarginine. A phosphoserine mark is found at S1582, S1624, S1626, S1629, S1687, S1690, S1707, S1708, and S1712. The tract at residues 1625–1647 (ASDSSLTDIQETRRQPIPDPGLM) is disordered. The stretch at 1713–1773 (PTLASKVDQL…ASDKLKKFTE (61 aa)) forms a coiled coil.

As to quaternary structure, interacts with DLG4, PDLIM5, PDLIM7 and LZTS3. Interacts with the actin cytoskeleton. Interacts (via PDZ domain) with EPHA4 (via PDZ motif); controls neuronal morphology through regulation of the RAP1 (RAP1A or RAP1B) and RAP2 (RAP2A, RAP2B or RAP2C) GTPases. In terms of processing, ubiquitinated and degraded by the SCF(BTRC) following phosphorylation by PLK2. Post-translationally, phosphorylated at Ser-1328 by CDK5, creating a docking site for the POLO box domains of PLK2. Subsequently, PLK2 binds and phosphorylates SIPA1L1, leading to ubiquitination and degradation by the proteasome.

The protein localises to the cytoplasm. It localises to the cytoskeleton. Its subcellular location is the postsynaptic density. It is found in the synapse. The protein resides in the synaptosome. Its function is as follows. Stimulates the GTPase activity of RAP2A. Promotes reorganization of the actin cytoskeleton and recruits DLG4 to F-actin. Contributes to the regulation of dendritic spine morphogenesis. The sequence is that of Signal-induced proliferation-associated 1-like protein 1 (Sipa1l1) from Mus musculus (Mouse).